We begin with the raw amino-acid sequence, 269 residues long: Meiotically up-regulated gene 43 protein (269 aa).

The protein resides in the mitochondrion. In terms of biological role, has a role in meiosis. This Schizosaccharomyces pombe (strain 972 / ATCC 24843) (Fission yeast) protein is Meiotically up-regulated gene 43 protein (mug43).